The chain runs to 462 residues: uncharacterized protein (462 aa).

A TRAM domain is found at 12–70 (MLKKNDIIQVAISDLSHEGAGVAKHDGFVFFVDNALPEEVIDMRVLKVNKNSGFGKVEA). 4 residues coordinate S-adenosyl-L-methionine: Q294, Y323, E344, and D392. C419 serves as the catalytic Nucleophile.

It belongs to the class I-like SAM-binding methyltransferase superfamily. RNA M5U methyltransferase family.

This is an uncharacterized protein from Streptococcus pyogenes serotype M3 (strain ATCC BAA-595 / MGAS315).